The primary structure comprises 489 residues: Ataxin-10 homolog (489 aa).

The protein belongs to the ataxin-10 family.

It is found in the cytoplasm. Its function is as follows. May play a role in the regulation of cytokinesis. This Debaryomyces hansenii (strain ATCC 36239 / CBS 767 / BCRC 21394 / JCM 1990 / NBRC 0083 / IGC 2968) (Yeast) protein is Ataxin-10 homolog (CTR86).